Reading from the N-terminus, the 341-residue chain is Probable 2' cyclic ADP-D-ribose synthase TcpO (341 aa).

In terms of domain architecture, TIR spans 204 to 336 (KEYDIFVSHS…EIIHEILERI (133 aa)). Residues 213-214 (SS) and K243 contribute to the NAD(+) site. Residue E279 is part of the active site.

It carries out the reaction NAD(+) + H2O = ADP-D-ribose + nicotinamide + H(+). It catalyses the reaction NAD(+) = 2'cADPR + nicotinamide + H(+). Its function is as follows. NAD(+) hydrolase (NADase) that catalyzes cleavage of NAD(+) into ADP-D-ribose (ADPR) and nicotinamide. In addition to ADPR, also generates a cyclization variant of cyclic ADPR (cADPR), termed v-cADPR (probably 2'cADPR). The polypeptide is Probable 2' cyclic ADP-D-ribose synthase TcpO (Methanobrevibacter olleyae).